The sequence spans 2641 residues: Inverse autotransporter adhesin YeeJ (2641 aa).

The signal sequence occupies residues M1–A26. One can recognise a LysM domain in the interval V50–V98. The interval P99 to L118 is disordered. Residues T125 to N400 are inverse autotransporter. Positions Q513–V605 are invasin 3 domain. Big-1 domains lie at H617 to I711, I721 to V815, Q822 to I913, A920 to V1017, V1024 to A1116, Q1123 to V1220, V1227 to A1319, Q1326 to V1423, Q1430 to I1523, I1531 to V1633, H1641 to V1734, E1741 to T1837, Q1844 to I1941, K1948 to V2032, F2048 to I2139, K2142 to T2236, and V2244 to V2336. Positions K2538 to L2641 are C-type lectin domain.

This sequence belongs to the intimin/invasin family.

The protein localises to the cell outer membrane. Its function is as follows. A probable inverse autotransporter, it may be involved in biofilm formation and cell adhesion. May bind peptidoglycan via its LysM domain. Upon overexpression shows increased mature biofilm formation. In Escherichia coli O17:K52:H18 (strain UMN026 / ExPEC), this protein is Inverse autotransporter adhesin YeeJ.